Here is a 248-residue protein sequence, read N- to C-terminus: Probable N-acetylglucosaminyl-phosphatidylinositol de-N-acetylase (248 aa).

The Lumenal portion of the chain corresponds to 1–7 (MIWFWST). The chain crosses the membrane as a helical span at residues 8-24 (LLVTAIAVLSTANESSS). The Cytoplasmic segment spans residues 25 to 248 (GQEKLAVESI…MSNNVLKRAT (224 aa)).

The protein belongs to the PIGL family.

The protein resides in the endoplasmic reticulum membrane. The catalysed reaction is a 6-(N-acetyl-alpha-D-glucosaminyl)-1-(1,2-diacyl-sn-glycero-3-phospho)-1D-myo-inositol + H2O = a 6-(alpha-D-glucosaminyl)-1-(1,2-diacyl-sn-glycero-3-phospho)-1D-myo-inositol + acetate. It participates in glycolipid biosynthesis; glycosylphosphatidylinositol-anchor biosynthesis. Its function is as follows. Involved in the second step of GPI biosynthesis. De-N-acetylation of N-acetylglucosaminyl-phosphatidylinositol. This is Probable N-acetylglucosaminyl-phosphatidylinositol de-N-acetylase (gpi12) from Schizosaccharomyces pombe (strain 972 / ATCC 24843) (Fission yeast).